A 157-amino-acid polypeptide reads, in one-letter code: Phosphopantetheine adenylyltransferase (157 aa).

Thr-10 lines the substrate pocket. Residues Thr-10–Phe-11 and His-18 contribute to the ATP site. The substrate site is built by Lys-42, Leu-74, and Arg-88. ATP-binding positions include Gly-89–Arg-91, Glu-99, and Asn-124–Ser-130.

It belongs to the bacterial CoaD family. Homohexamer. It depends on Mg(2+) as a cofactor.

The protein localises to the cytoplasm. It carries out the reaction (R)-4'-phosphopantetheine + ATP + H(+) = 3'-dephospho-CoA + diphosphate. It participates in cofactor biosynthesis; coenzyme A biosynthesis; CoA from (R)-pantothenate: step 4/5. Reversibly transfers an adenylyl group from ATP to 4'-phosphopantetheine, yielding dephospho-CoA (dPCoA) and pyrophosphate. This is Phosphopantetheine adenylyltransferase from Helicobacter pylori (strain Shi470).